We begin with the raw amino-acid sequence, 378 residues long: Chaperone protein DnaJ (378 aa).

In terms of domain architecture, J spans 5 to 70 (DYYETLGVSQ…QKRAAYDQYG (66 aa)). The segment at 134 to 212 (GKSLEIKVPT…CRGQGRVEKT (79 aa)) adopts a CR-type zinc-finger fold. 8 residues coordinate Zn(2+): cysteine 147, cysteine 150, cysteine 164, cysteine 167, cysteine 186, cysteine 189, cysteine 200, and cysteine 203. CXXCXGXG motif repeat units follow at residues 147–154 (CEPCDGSG), 164–171 (CSTCHGHG), 186–193 (CPTCSGKG), and 200–207 (CTSCRGQG).

This sequence belongs to the DnaJ family. As to quaternary structure, homodimer. Requires Zn(2+) as cofactor.

It is found in the cytoplasm. Its function is as follows. Participates actively in the response to hyperosmotic and heat shock by preventing the aggregation of stress-denatured proteins and by disaggregating proteins, also in an autonomous, DnaK-independent fashion. Unfolded proteins bind initially to DnaJ; upon interaction with the DnaJ-bound protein, DnaK hydrolyzes its bound ATP, resulting in the formation of a stable complex. GrpE releases ADP from DnaK; ATP binding to DnaK triggers the release of the substrate protein, thus completing the reaction cycle. Several rounds of ATP-dependent interactions between DnaJ, DnaK and GrpE are required for fully efficient folding. Also involved, together with DnaK and GrpE, in the DNA replication of plasmids through activation of initiation proteins. In Colwellia psychrerythraea (strain 34H / ATCC BAA-681) (Vibrio psychroerythus), this protein is Chaperone protein DnaJ.